The following is a 127-amino-acid chain: NADPH-dependent 7-cyano-7-deazaguanine reductase (127 aa).

Cys40 serves as the catalytic Thioimide intermediate. Catalysis depends on Asp47, which acts as the Proton donor. Substrate contacts are provided by residues 62–64 (VEL) and 81–82 (HE).

It belongs to the GTP cyclohydrolase I family. QueF type 1 subfamily.

The protein localises to the cytoplasm. It catalyses the reaction 7-aminomethyl-7-carbaguanine + 2 NADP(+) = 7-cyano-7-deazaguanine + 2 NADPH + 3 H(+). The protein operates within tRNA modification; tRNA-queuosine biosynthesis. In terms of biological role, catalyzes the NADPH-dependent reduction of 7-cyano-7-deazaguanine (preQ0) to 7-aminomethyl-7-deazaguanine (preQ1). This Campylobacter lari (strain RM2100 / D67 / ATCC BAA-1060) protein is NADPH-dependent 7-cyano-7-deazaguanine reductase.